A 318-amino-acid chain; its full sequence is tRNA-cytidine(32) 2-sulfurtransferase (318 aa).

Positions 65–70 (SGGKDS) match the PP-loop motif motif. [4Fe-4S] cluster-binding residues include Cys-140, Cys-143, and Cys-231.

The protein belongs to the TtcA family. As to quaternary structure, homodimer. It depends on Mg(2+) as a cofactor. The cofactor is [4Fe-4S] cluster.

It is found in the cytoplasm. The catalysed reaction is cytidine(32) in tRNA + S-sulfanyl-L-cysteinyl-[cysteine desulfurase] + AH2 + ATP = 2-thiocytidine(32) in tRNA + L-cysteinyl-[cysteine desulfurase] + A + AMP + diphosphate + H(+). It functions in the pathway tRNA modification. Its function is as follows. Catalyzes the ATP-dependent 2-thiolation of cytidine in position 32 of tRNA, to form 2-thiocytidine (s(2)C32). The sulfur atoms are provided by the cysteine/cysteine desulfurase (IscS) system. This Herminiimonas arsenicoxydans protein is tRNA-cytidine(32) 2-sulfurtransferase.